Here is an 871-residue protein sequence, read N- to C-terminus: MAAVDSDIEPLPRGGFRCCLCHITTANQPSLDAHLGGRKHRHLVELRATRKAQGLRSVFVSGFPRDVDSTQLSEYFQAFGPVASVVMDKDKGVFAIVEMGDLGAREAVLSQPQHSLGGRRLRVRPREQIEFQSPASRSPKRVAPDSHQLIKALAEAPDVEAQMVKLVGLRELSEAERQLRSLVVALMQEVFAEFFPGCVVHPFGSSINSFDVHGCDLDLFLDLGDLDEPQPAPKAPESPSLDSALASPLDPQALACTPASPPDSQPPASPQDSEALDFEAPSSSLAPRTPDSALASETLASPRSLPPASPLQEDQGDGDQGKAVELAEALKGEKAEGGAMLELVGSILRGCVPGVYRVQTVPSARCPVVKFCHRPSGLHGDISLSNRLALHNSRFLSLCSELDGRVRPLVYTLRCWAQGRGLSGSGPLLNNYALTLLVIYFLQTRDPPVLPTVSQLTQKAGEQVEVDGWDCSFPRDASRLEPSTNKEPLSSLLAQFFSCVSCWDLRGSLLSLREGQALSVAGGLPSNLSEGLRLGPMNLQDPFDLSHNVAANVTSRVAGRLQNCCRAAANYCRSLQYQRRSSRGRDWGLLPLLQPSSPSSILSATPIPLPPASFTQLTAVLAQVLREALGCHIEQGTKRLRSEGGGPGEPPQGGTSKRAKLDGQKKSCEEGPEEQQGCAGEHGEDGVEEMVIEVGESVQDWVMRSPGQLGELPLMTGKHLATREEGQSGTAALAKQGPRGPEAACEGSQAEAEKRVSLTVSWRCALWHRVWQGRRRARRRLQQQIKEGGGSGAGSGAEWLATEAQVTRELRGLSSTEQRPEAEPLLTFVASTSQADQSLTVTPLQDSQGLFPDLHHFLQVFLPQALRNLLK.

The Matrin-type zinc-finger motif lies at 16–46 (FRCCLCHITTANQPSLDAHLGGRKHRHLVEL). The RRM domain maps to 56–128 (RSVFVSGFPR…RRLRVRPREQ (73 aa)). ATP is bound at residue S205. Mg(2+) contacts are provided by D216 and D218. UTP-binding residues include D216 and D218. Positions 252–321 (QALACTPASP…QEDQGDGDQG (70 aa)) are disordered. A compositionally biased stretch (pro residues) spans 259–269 (ASPPDSQPPAS). N392 contacts ATP. The UTP site is built by N392, R414, Y432, and H547. The region spanning 489-547 (LSSLLAQFFSCVSCWDLRGSLLSLREGQALSVAGGLPSNLSEGLRLGPMNLQDPFDLSH) is the PAP-associated domain. Residues 596–871 (SSPSSILSAT…LPQALRNLLK (276 aa)) are KA1; binds the bulging loops of U6 snRNA but is dispensable for terminal uridylyltransferase activity. The segment at 636–684 (GTKRLRSEGGGPGEPPQGGTSKRAKLDGQKKSCEEGPEEQQGCAGEHGE) is disordered. Positions 659 to 669 (AKLDGQKKSCE) are enriched in basic and acidic residues. Phosphoserine is present on S748.

This sequence belongs to the DNA polymerase type-B-like family. In terms of assembly, associates with the cleavage and polyadenylation specificity factor (CPSF) complex. Interacts with CPSF1 and CPSF3; the interaction is direct. Interacts with PIP5K1A. Mg(2+) is required as a cofactor. It depends on Mn(2+) as a cofactor. Post-translationally, phosphorylated by CK1 in the proline-rich (Pro-rich) region.

It localises to the nucleus. The protein resides in the nucleolus. Its subcellular location is the nucleus speckle. It catalyses the reaction RNA(n) + UTP = RNA(n)-3'-uridine ribonucleotide + diphosphate. The enzyme catalyses RNA(n) + ATP = RNA(n)-3'-adenine ribonucleotide + diphosphate. Its activity is regulated as follows. Adenylyltransferase activity is specifically phosphatidylinositol 4,5-bisphosphate (PtdIns(4,5)P2). Poly(A) polymerase that creates the 3'-poly(A) tail of specific pre-mRNAs. Localizes to nuclear speckles together with PIP5K1A and mediates polyadenylation of a select set of mRNAs, such as HMOX1. In addition to polyadenylation, it is also required for the 3'-end cleavage of pre-mRNAs: binds to the 3'UTR of targeted pre-mRNAs and promotes the recruitment and assembly of the CPSF complex on the 3'UTR of pre-mRNAs. In addition to adenylyltransferase activity, also has uridylyltransferase activity. However, the ATP ratio is higher than UTP in cells, suggesting that it functions primarily as a poly(A) polymerase. Acts as a specific terminal uridylyltransferase for U6 snRNA in vitro: responsible for a controlled elongation reaction that results in the restoration of the four 3'-terminal UMP-residues found in newly transcribed U6 snRNA. Not involved in replication-dependent histone mRNA degradation. The protein is Speckle targeted PIP5K1A-regulated poly(A) polymerase (TUT1) of Bos taurus (Bovine).